The following is a 147-amino-acid chain: Mid1-interacting protein 1-B (147 aa).

Belongs to the SPOT14 family.

The protein localises to the nucleus. It localises to the cytoplasm. The protein resides in the cytoskeleton. In terms of biological role, involved in stabilization of microtubules. May play a role in the regulation of lipogenesis. This chain is Mid1-interacting protein 1-B, found in Danio rerio (Zebrafish).